The following is a 44-amino-acid chain: Large ribosomal subunit protein bL36 (44 aa).

The protein belongs to the bacterial ribosomal protein bL36 family.

In Pseudoalteromonas translucida (strain TAC 125), this protein is Large ribosomal subunit protein bL36.